Consider the following 970-residue polypeptide: Transposase for insertion sequence element IS1071 in transposon Tn5271 (970 aa).

The protein belongs to the transposase 7 family.

Required for transposition of transposon Tn5271. This chain is Transposase for insertion sequence element IS1071 in transposon Tn5271, found in Comamonas testosteroni (Pseudomonas testosteroni).